The following is a 228-amino-acid chain: Phosphoglycolate phosphatase (228 aa).

Asp-12 serves as the catalytic Nucleophile. Mg(2+) contacts are provided by Asp-12, Asp-14, and Asp-177.

This sequence belongs to the HAD-like hydrolase superfamily. CbbY/CbbZ/Gph/YieH family. Requires Mg(2+) as cofactor.

The enzyme catalyses 2-phosphoglycolate + H2O = glycolate + phosphate. It participates in organic acid metabolism; glycolate biosynthesis; glycolate from 2-phosphoglycolate: step 1/1. In terms of biological role, specifically catalyzes the dephosphorylation of 2-phosphoglycolate. Is involved in the dissimilation of the intracellular 2-phosphoglycolate formed during the DNA repair of 3'-phosphoglycolate ends, a major class of DNA lesions induced by oxidative stress. This Vibrio parahaemolyticus serotype O3:K6 (strain RIMD 2210633) protein is Phosphoglycolate phosphatase.